A 92-amino-acid chain; its full sequence is UPF0223 protein Sez_0908 (92 aa).

This sequence belongs to the UPF0223 family.

This Streptococcus equi subsp. zooepidemicus (strain MGCS10565) protein is UPF0223 protein Sez_0908.